Here is a 290-residue protein sequence, read N- to C-terminus: 4-diphosphocytidyl-2-C-methyl-D-erythritol kinase (290 aa).

Lys-13 is an active-site residue. An ATP-binding site is contributed by 96–106 (PMGGGIGGGSS). The active site involves Asp-138.

The protein belongs to the GHMP kinase family. IspE subfamily.

The catalysed reaction is 4-CDP-2-C-methyl-D-erythritol + ATP = 4-CDP-2-C-methyl-D-erythritol 2-phosphate + ADP + H(+). It participates in isoprenoid biosynthesis; isopentenyl diphosphate biosynthesis via DXP pathway; isopentenyl diphosphate from 1-deoxy-D-xylulose 5-phosphate: step 3/6. Its function is as follows. Catalyzes the phosphorylation of the position 2 hydroxy group of 4-diphosphocytidyl-2C-methyl-D-erythritol. The protein is 4-diphosphocytidyl-2-C-methyl-D-erythritol kinase of Vibrio campbellii (strain ATCC BAA-1116).